The following is a 139-amino-acid chain: Putative nickel-responsive regulator (139 aa).

Positions 79, 90, 92, and 98 each coordinate Ni(2+).

The protein belongs to the transcriptional regulatory CopG/NikR family. Ni(2+) is required as a cofactor.

Functionally, transcriptional regulator. The protein is Putative nickel-responsive regulator of Geotalea uraniireducens (strain Rf4) (Geobacter uraniireducens).